Here is a 376-residue protein sequence, read N- to C-terminus: Chaperone protein DnaJ (376 aa).

The J domain maps to 5-70 (DYYETLGVQK…EKRAAYDQYG (66 aa)). Residues 133–211 (GTTKDIKINT…CHGDGRVHKK (79 aa)) form a CR-type zinc finger. C146, C149, C163, C166, C185, C188, C199, and C202 together coordinate Zn(2+). 4 CXXCXGXG motif repeats span residues 146-153 (CDHCDGSG), 163-170 (CPTCHGHG), 185-192 (CPTCQGSG), and 199-206 (CKHCHGDG).

This sequence belongs to the DnaJ family. Homodimer. Zn(2+) serves as cofactor.

It is found in the cytoplasm. In terms of biological role, participates actively in the response to hyperosmotic and heat shock by preventing the aggregation of stress-denatured proteins and by disaggregating proteins, also in an autonomous, DnaK-independent fashion. Unfolded proteins bind initially to DnaJ; upon interaction with the DnaJ-bound protein, DnaK hydrolyzes its bound ATP, resulting in the formation of a stable complex. GrpE releases ADP from DnaK; ATP binding to DnaK triggers the release of the substrate protein, thus completing the reaction cycle. Several rounds of ATP-dependent interactions between DnaJ, DnaK and GrpE are required for fully efficient folding. Also involved, together with DnaK and GrpE, in the DNA replication of plasmids through activation of initiation proteins. This is Chaperone protein DnaJ from Mannheimia succiniciproducens (strain KCTC 0769BP / MBEL55E).